A 110-amino-acid chain; its full sequence is Probable ribonuclease HepT (110 aa).

Residues R75 and H80 contribute to the active site. The RX(4)HXY motif motif lies at 75-82 (RDKLIHAY). Y82 is modified (O-di-AMP-tyrosine).

Belongs to the HepT RNase toxin family. Modified by cognate antitoxin MntA; probably at least 2 successive AMPylation events occur on Tyr-82.

In terms of biological role, toxic component of a type VII toxin-antitoxin (TA) system. Overexpression in E.coli inhibits cell growth. Neutralized by cognate antitoxin MntA. Neutralization is probably due to AMPylation by MntA. Probably an RNAase. This chain is Probable ribonuclease HepT, found in Thermococcus cleftensis (strain DSM 27260 / KACC 17922 / CL1).